Here is a 342-residue protein sequence, read N- to C-terminus: Prenyl transferase ptmC (342 aa).

Residues 17-37 (LSFLTLTVGALALIVVLYISI) traverse the membrane as a helical segment. Position 110 (His110) interacts with isopentenyl diphosphate. Positions 117 and 121 each coordinate Mg(2+). Residue Arg126 coordinates dimethylallyl diphosphate. Asn154 carries an N-linked (GlcNAc...) asparagine glycan. Dimethylallyl diphosphate contacts are provided by Lys210, Thr211, Gln240, Asn247, and Lys257.

This sequence belongs to the FPP/GGPP synthase family.

The protein localises to the membrane. It participates in secondary metabolite biosynthesis. Its function is as follows. Prenyl transferase; part of the gene cluster that mediates the biosynthesis of the indole diterpenes penitrems. The geranylgeranyl diphosphate (GGPP) synthase ptmG catalyzes the first step in penitrem biosynthesis via conversion of farnesyl pyrophosphate and isopentyl pyrophosphate into geranylgeranyl pyrophosphate (GGPP). Condensation of indole-3-glycerol phosphate with GGPP by the prenyl transferase ptmC then forms 3-geranylgeranylindole (3-GGI). Epoxidation by the FAD-dependent monooxygenase ptmM leads to a epoxidized-GGI that is substrate of the terpene cyclase ptmB for cyclization to yield paspaline. Paspaline is subsequently converted to 13-desoxypaxilline by the cytochrome P450 monooxygenase ptmP, the latter being then converted to paxilline by the cytochrome P450 monooxygenase ptmQ. Paxilline is converted to beta-paxitriol via C-10 ketoreduction by the short-chain dehydrogenase ptmH which can be monoprenylated at the C-20 by the indole diterpene prenyltransferase ptmD. A two-step elimination (acetylation and elimination) process performed by the O-acetyltransferase ptmV and ptmI leads to the production of the prenylated form of penijanthine. The FAD-linked oxidoreductase ptmO then converts the prenylated form of penijanthine into PC-M5 which is in turn transformed into PC-M4 by the aromatic dimethylallyltransferase ptmE. Five sequential oxidative transformations performed by the cytochrome P450 monooxygenases ptmK, ptmU, ptmL, ptmN and ptmJ yield the various penitrem compounds. PtmK, ptmU and ptmM are involved in the formation of the key bicyclic ring of penitrem C via the formation of the intermediates secopenitrem D and penitrem D. PtmL catalyzes the epoxidation of penitrem D and C to yield penitrem B and F, respectively. PtmJ catalyzes the last benzylic hydroxylation to convert penitrem B to prenitrem E and penitrem F to penitrem A. This is Prenyl transferase ptmC from Penicillium ochrochloron.